Reading from the N-terminus, the 736-residue chain is Catalase-peroxidase (736 aa).

The interval 1-25 is disordered; the sequence is MSENGKCPVTGKTSKPVAGGGTSNQ. A cross-link (tryptophyl-tyrosyl-methioninium (Trp-Tyr) (with M-250)) is located at residues 96–224; sequence WHSAGTYRMG…LAAVQMGLIY (129 aa). His-97 (proton acceptor) is an active-site residue. The segment at residues 224–250 is a cross-link (tryptophyl-tyrosyl-methioninium (Tyr-Met) (with W-96)); that stretch reads YVNPEGPDGNPDPIASGKDVRETFARM. His-265 is a binding site for heme b. Residues 294-313 are disordered; the sequence is GWKSSHGRGKGGDTISSGIE.

It belongs to the peroxidase family. Peroxidase/catalase subfamily. In terms of assembly, homodimer or homotetramer. Heme b is required as a cofactor. In terms of processing, formation of the three residue Trp-Tyr-Met cross-link is important for the catalase, but not the peroxidase activity of the enzyme.

It carries out the reaction H2O2 + AH2 = A + 2 H2O. The enzyme catalyses 2 H2O2 = O2 + 2 H2O. In terms of biological role, bifunctional enzyme with both catalase and broad-spectrum peroxidase activity. The sequence is that of Catalase-peroxidase from Desulfatibacillum aliphaticivorans.